The chain runs to 431 residues: Glutamate--tRNA ligase 1 (431 aa).

The short motif at 6 to 16 (PSPTGDMHIGN) is the 'HIGH' region element. Residues 235–239 (KMSKR) carry the 'KMSKS' region motif. Position 238 (Lys-238) interacts with ATP.

Belongs to the class-I aminoacyl-tRNA synthetase family. Glutamate--tRNA ligase type 1 subfamily. In terms of assembly, monomer.

The protein resides in the cytoplasm. The catalysed reaction is tRNA(Glu) + L-glutamate + ATP = L-glutamyl-tRNA(Glu) + AMP + diphosphate. Its function is as follows. Catalyzes the attachment of glutamate to tRNA(Glu) in a two-step reaction: glutamate is first activated by ATP to form Glu-AMP and then transferred to the acceptor end of tRNA(Glu). This is Glutamate--tRNA ligase 1 from Campylobacter curvus (strain 525.92).